Consider the following 226-residue polypeptide: MSAILKATNINKIYDEGAVSTQVLTGLDLTVNAGERIAIVGTSGSGKSTLLHLLGGLDTPTSGEVWLHGQLLNSMNETERGAMRNKHLGFIYQFHHLLAEFTAVENVAMPLLMRSEVSTAEARQQAIDILNSVGLEHRLAHRPGELSGGERQRVAIARALVTKPSLILADEPTGNLDYDNAQSVFGLLSELQSTMQTALLMVTHDRNLAALADRQLLLRNGHWENY.

The ABC transporter domain occupies 5–226; sequence LKATNINKIY…LLRNGHWENY (222 aa). 41 to 48 contributes to the ATP binding site; sequence GTSGSGKS.

It belongs to the ABC transporter superfamily. Lipoprotein translocase (TC 3.A.1.125) family. The complex is composed of two ATP-binding proteins (LolD) and two transmembrane proteins (LolC and LolE).

It localises to the cell inner membrane. In terms of biological role, part of the ABC transporter complex LolCDE involved in the translocation of mature outer membrane-directed lipoproteins, from the inner membrane to the periplasmic chaperone, LolA. Responsible for the formation of the LolA-lipoprotein complex in an ATP-dependent manner. The polypeptide is Lipoprotein-releasing system ATP-binding protein LolD (Psychrobacter arcticus (strain DSM 17307 / VKM B-2377 / 273-4)).